The following is a 325-amino-acid chain: uncharacterized protein (325 aa).

The HD domain maps to 49–151 (RYEHSIGVML…ELCADRTDYT (103 aa)).

This is an uncharacterized protein from Bacillus subtilis (strain 168).